The following is a 1546-amino-acid chain: DNA-directed RNA polymerase subunit beta' (1546 aa).

Residues Cys57, Cys59, Cys72, and Cys75 each contribute to the Zn(2+) site. Mg(2+)-binding residues include Asp756, Asp758, and Asp760. Zn(2+) contacts are provided by Cys1130, Cys1211, Cys1218, and Cys1221. The interval 1512–1546 (LEKYGEGSTSSDAVTGGQRYDDTRPGSSINPGYGD) is disordered. A compositionally biased stretch (polar residues) spans 1536 to 1546 (PGSSINPGYGD).

It belongs to the RNA polymerase beta' chain family. As to quaternary structure, the RNAP catalytic core consists of 2 alpha, 1 beta, 1 beta' and 1 omega subunit. When a sigma factor is associated with the core the holoenzyme is formed, which can initiate transcription. It depends on Mg(2+) as a cofactor. The cofactor is Zn(2+).

The enzyme catalyses RNA(n) + a ribonucleoside 5'-triphosphate = RNA(n+1) + diphosphate. DNA-dependent RNA polymerase catalyzes the transcription of DNA into RNA using the four ribonucleoside triphosphates as substrates. In Deinococcus radiodurans (strain ATCC 13939 / DSM 20539 / JCM 16871 / CCUG 27074 / LMG 4051 / NBRC 15346 / NCIMB 9279 / VKM B-1422 / R1), this protein is DNA-directed RNA polymerase subunit beta'.